Reading from the N-terminus, the 304-residue chain is Aspartate carbamoyltransferase catalytic subunit (304 aa).

The carbamoyl phosphate site is built by R57 and T58. Residue K86 participates in L-aspartate binding. Carbamoyl phosphate contacts are provided by R107, H135, and Q138. R168 and R229 together coordinate L-aspartate. The carbamoyl phosphate site is built by L266 and P267.

The protein belongs to the aspartate/ornithine carbamoyltransferase superfamily. ATCase family. As to quaternary structure, heterooligomer of catalytic and regulatory chains.

The enzyme catalyses carbamoyl phosphate + L-aspartate = N-carbamoyl-L-aspartate + phosphate + H(+). Its pathway is pyrimidine metabolism; UMP biosynthesis via de novo pathway; (S)-dihydroorotate from bicarbonate: step 2/3. Its function is as follows. Catalyzes the condensation of carbamoyl phosphate and aspartate to form carbamoyl aspartate and inorganic phosphate, the committed step in the de novo pyrimidine nucleotide biosynthesis pathway. This chain is Aspartate carbamoyltransferase catalytic subunit, found in Methanosphaera stadtmanae (strain ATCC 43021 / DSM 3091 / JCM 11832 / MCB-3).